Consider the following 60-residue polypeptide: Cytotoxin 5 (60 aa).

4 disulfides stabilise this stretch: cysteine 3–cysteine 21, cysteine 14–cysteine 38, cysteine 42–cysteine 53, and cysteine 54–cysteine 59.

Belongs to the three-finger toxin family. Short-chain subfamily. Type IA cytotoxin sub-subfamily. As to quaternary structure, monomer in solution; Homodimer and oligomer in the presence of negatively charged lipids forming a pore with a size ranging between 20 and 30 Angstroms. In terms of tissue distribution, expressed by the venom gland.

It is found in the secreted. The protein resides in the target cell membrane. Functionally, shows cytolytic activity on many different cells by forming pore in lipid membranes. In vivo, increases heart rate or kills the animal by cardiac arrest. In addition, it binds to heparin with high affinity, interacts with Kv channel-interacting protein 1 (KCNIP1) in a calcium-independent manner, and binds to integrin alpha-V/beta-3 (ITGAV/ITGB3) with moderate affinity. This chain is Cytotoxin 5, found in Naja haje haje (Egyptian cobra).